The following is a 330-amino-acid chain: Glucosyltransferase 3 (330 aa).

UDP is bound at residue threonine 16. Positions 106–111 (MFSGNF) are substrate protein-binding loop. UDP-binding positions include arginine 179, 211–214 (YRPD), and 244–249 (SYKLGS).

The protein belongs to the Gtf3 glucosyltransferase family. In terms of assembly, homotetramer; a dimer of dimers. In vitro glycosyltransferase activity is metal-independent. is required as a cofactor.

It functions in the pathway protein modification; protein glycosylation. Required for polymorphic O-glycosylation of the serine-rich repeat protein Fap1. Catalyzes the second step in glycosylation of the serine-rich repeat protein in this bacteria. Transfers glucose from UDP-glucose to the terminal GlcNAc moiety of 3-O-(N-acetyl-alpha-D-glucosaminyl)-L-seryl-[protein] which results from the first glycosylation step of Fap1; does not use other sugar nucleotides as substrates. This Streptococcus parasanguinis protein is Glucosyltransferase 3.